A 335-amino-acid polypeptide reads, in one-letter code: MKIGVIGSGSFGTALGSLLADKGYEVTLWCRNDSQIESINRNHINNKHLPDFTLPEKLTASKDLRTVVQGKDMIVSSPPSHALTEILREIKEYLPEKVPIVSASKGIENGTLRLVSEIFESELPGKYHSYLSYLSGPSFAKEIIQKVPTIVSIASRSETTARKVQEIFSFLYFRTYWTPDVIGVEVGGSLKNVIALAAGVSDGLGFGQNTRAALITRGLNEITKIGLKLGADPMTFLGPSGMGDLILTCCGEQSRNRTVGFRLGKGETLEQILSGMNEVAEGIKTTQSAYELSQKLGIEMAITNEVYKMLYEDKNPKEVVKDLMKRDLKREGVLV.

The NADPH site is built by Ser-10, Phe-11, Arg-31, and Lys-105. 3 residues coordinate sn-glycerol 3-phosphate: Lys-105, Gly-136, and Ser-138. Ala-140 contacts NADPH. Residues Lys-191, Asp-244, Ser-254, Arg-255, and Asn-256 each contribute to the sn-glycerol 3-phosphate site. Lys-191 (proton acceptor) is an active-site residue. Arg-255 lines the NADPH pocket. Residues Val-279 and Glu-281 each coordinate NADPH.

Belongs to the NAD-dependent glycerol-3-phosphate dehydrogenase family.

The protein resides in the cytoplasm. It carries out the reaction sn-glycerol 3-phosphate + NAD(+) = dihydroxyacetone phosphate + NADH + H(+). The enzyme catalyses sn-glycerol 3-phosphate + NADP(+) = dihydroxyacetone phosphate + NADPH + H(+). The protein operates within membrane lipid metabolism; glycerophospholipid metabolism. Functionally, catalyzes the reduction of the glycolytic intermediate dihydroxyacetone phosphate (DHAP) to sn-glycerol 3-phosphate (G3P), the key precursor for phospholipid synthesis. This is Glycerol-3-phosphate dehydrogenase [NAD(P)+] from Leptospira borgpetersenii serovar Hardjo-bovis (strain JB197).